The chain runs to 45 residues: Monellin chain A (45 aa).

As to quaternary structure, heterodimer of an A chain and a B chain.

Functionally, taste-modifying protein; intensely sweet-tasting protein. The sequence is that of Monellin chain A from Dioscoreophyllum cumminsii (Serendipity berry).